A 53-amino-acid polypeptide reads, in one-letter code: Rubredoxin 3 (53 aa).

Residues 1-53 (MQKWVCVPCGYEYDPADGDPENGIEPGTAFEDLPEDWVCPVCGVDKSFFEPVS) form the Rubredoxin-like domain. Residues Cys-6, Cys-9, Cys-39, and Cys-42 each coordinate Fe cation.

This sequence belongs to the rubredoxin family. As to quaternary structure, monomer. Fe(3+) serves as cofactor.

Functionally, functions as an electron acceptor for pyruvate ferredoxin oxidoreductase (PFOR). This chain is Rubredoxin 3 (rub3), found in Chlorobaculum tepidum (strain ATCC 49652 / DSM 12025 / NBRC 103806 / TLS) (Chlorobium tepidum).